Consider the following 264-residue polypeptide: Small ribosomal subunit protein uS3 (264 aa).

In terms of domain architecture, KH type-2 spans 39 to 107; that stretch reads VREFLKKKLK…PVHVNIEEIR (69 aa). The segment at 211–264 is disordered; the sequence is NDAPVVEEPQEERRKRPGRPEGRRREGEGRPGGQRRGAGAGGRRSGGADAKTGE. Positions 221-239 are enriched in basic and acidic residues; it reads EERRKRPGRPEGRRREGEG. A compositionally biased stretch (gly residues) spans 240–255; it reads RPGGQRRGAGAGGRRS.

This sequence belongs to the universal ribosomal protein uS3 family. As to quaternary structure, part of the 30S ribosomal subunit. Forms a tight complex with proteins S10 and S14.

In terms of biological role, binds the lower part of the 30S subunit head. Binds mRNA in the 70S ribosome, positioning it for translation. In Ralstonia nicotianae (strain ATCC BAA-1114 / GMI1000) (Ralstonia solanacearum), this protein is Small ribosomal subunit protein uS3.